We begin with the raw amino-acid sequence, 173 residues long: UPF0398 protein SMU_470 (173 aa).

Belongs to the UPF0398 family.

This Streptococcus mutans serotype c (strain ATCC 700610 / UA159) protein is UPF0398 protein SMU_470.